A 437-amino-acid chain; its full sequence is Perilipin-2 (437 aa).

Ala-2 bears the N-acetylalanine mark. Ser-215 carries the phosphoserine modification. Tyr-232 is modified (phosphotyrosine). The segment at 412-437 is disordered; it reads SQNAQDQGAEMDKSSQETQRSEHKTH. Basic and acidic residues predominate over residues 421–437; the sequence is EMDKSSQETQRSEHKTH.

The protein belongs to the perilipin family. As to quaternary structure, interacts with IRGC. Acylated; primarily with C14, C16 and C18 fatty acids. In terms of processing, phosphorylation at Tyr-232 by isoform 1 of CHKA (CHKalpha2) promotes dissociation from lipid droplets: dissociation is followed by recruitment of autophagosome machinery to lipid droplets and subsequent lipid droplet lipolysis. Post-translationally, polyubiquitination of Nt-acetylatable A-PLIN2 by MARCHF6 lead to degradation by 26S proteasomes. Milk lipid globules.

The protein resides in the membrane. Its subcellular location is the lipid droplet. Functionally, structural component of lipid droplets, which is required for the formation and maintenance of lipid storage droplets. This is Perilipin-2 from Homo sapiens (Human).